Reading from the N-terminus, the 526-residue chain is Peptide chain release factor 3 (526 aa).

The region spanning 9–277 (NKRRTFAIIS…DFVEYAPGPQ (269 aa)) is the tr-type G domain. GTP is bound by residues 18–25 (SHPDAGKT), 86–90 (DTPGH), and 140–143 (NKLD).

It belongs to the TRAFAC class translation factor GTPase superfamily. Classic translation factor GTPase family. PrfC subfamily.

It is found in the cytoplasm. Functionally, increases the formation of ribosomal termination complexes and stimulates activities of RF-1 and RF-2. It binds guanine nucleotides and has strong preference for UGA stop codons. It may interact directly with the ribosome. The stimulation of RF-1 and RF-2 is significantly reduced by GTP and GDP, but not by GMP. This chain is Peptide chain release factor 3, found in Legionella pneumophila (strain Lens).